Here is a 412-residue protein sequence, read N- to C-terminus: Multifunctional CCA protein (412 aa).

Gly8 and Arg11 together coordinate ATP. Positions 8 and 11 each coordinate CTP. Glu21 and Asp23 together coordinate Mg(2+). Arg91, Arg137, and Arg140 together coordinate ATP. CTP contacts are provided by Arg91, Arg137, and Arg140. The 102-residue stretch at 228-329 (CGIHTLMSLQ…WRLLQRLDVL (102 aa)) folds into the HD domain.

This sequence belongs to the tRNA nucleotidyltransferase/poly(A) polymerase family. Bacterial CCA-adding enzyme type 1 subfamily. Monomer. Can also form homodimers and oligomers. The cofactor is Mg(2+). Ni(2+) is required as a cofactor.

It catalyses the reaction a tRNA precursor + 2 CTP + ATP = a tRNA with a 3' CCA end + 3 diphosphate. It carries out the reaction a tRNA with a 3' CCA end + 2 CTP + ATP = a tRNA with a 3' CCACCA end + 3 diphosphate. In terms of biological role, catalyzes the addition and repair of the essential 3'-terminal CCA sequence in tRNAs without using a nucleic acid template. Adds these three nucleotides in the order of C, C, and A to the tRNA nucleotide-73, using CTP and ATP as substrates and producing inorganic pyrophosphate. tRNA 3'-terminal CCA addition is required both for tRNA processing and repair. Also involved in tRNA surveillance by mediating tandem CCA addition to generate a CCACCA at the 3' terminus of unstable tRNAs. While stable tRNAs receive only 3'-terminal CCA, unstable tRNAs are marked with CCACCA and rapidly degraded. This Acinetobacter baumannii (strain ATCC 17978 / DSM 105126 / CIP 53.77 / LMG 1025 / NCDC KC755 / 5377) protein is Multifunctional CCA protein.